Consider the following 293-residue polypeptide: Mating-type protein A-1 (293 aa).

Residues 42–97 constitute a DNA-binding region (alpha box); that stretch reads AAKKKVNGFMGFRSYYSPLFSQLPQKERSPFMTILWQHDPFHNEWDFMCSVYSSIR.

The protein belongs to the MATALPHA1 family.

Its subcellular location is the nucleus. Mating type proteins are sequence specific DNA-binding proteins that act as master switches in yeast differentiation by controlling gene expression in a cell type-specific fashion. Transcriptional activator that induces the transcription of A-specific genes like mating factor ccg-4. Required for mating as an A-cell and for blocking of heterokaryon formation (vegetative incompatibility). This is Mating-type protein A-1 (mtA-1) from Neurospora crassa (strain ATCC 24698 / 74-OR23-1A / CBS 708.71 / DSM 1257 / FGSC 987).